The sequence spans 441 residues: DNA-binding protein (441 aa).

Basic residues predominate over residues 1–18 (MERTPKRAHGFRSTKPVK). The segment at 1–85 (MERTPKRAHG…EESPEAPLSD (85 aa)) is disordered. Acidic residues-rich tracts occupy residues 24-33 (MMEEEEEEVE) and 67-79 (VDDE…EESP). Residues C191 and H193 each contribute to the Zn(2+) site. Residues 204-236 (VELNPSSEAGKRALAEQNGVIEKNRFGRQVVVL) are flexible loop. Positions 244, 262, 305, 307, 359, and 380 each coordinate Zn(2+). Residues 426-441 (EVLAPVSPIASDDPFA) are C-terminal arm, DBP binding.

It belongs to the adenoviridae E2A DNA-binding protein family. In terms of assembly, homomultimerizes on viral ssDNA bound to pTP. Forms a initiation complex with viral polymerase, pTP and hosts NFIA and POU2F1/OCT1. Interacts with host SRCAP.

The protein localises to the host nucleus. In terms of biological role, plays a role in the elongation phase of viral strand displacement replication by unwinding the template in an ATP-independent fashion, employing its capacity to form multimers. Also enhances the rate of initiation. Released from template upon second strand synthesis. Assembles in complex with viral pTP, viral pol, host NFIA and host POU2F1/OCT1 on viral origin of replication. Covers the whole ssDNA genome during synthesis. The complementary strand synthesis induces its relese from DNA template. May inhibit cellular transcription mediated by the interaction between host SRCAP and CBP. The polypeptide is DNA-binding protein (Fowl adenovirus A serotype 1 (strain CELO / Phelps) (FAdV-1)).